Reading from the N-terminus, the 246-residue chain is tRNA (guanine-N(7)-)-methyltransferase (246 aa).

The disordered stretch occupies residues 1–26 (MIENPSPSAANLPEHPSTDASHPRNI). Residues glutamate 75, glutamate 100, aspartate 127, and aspartate 150 each contribute to the S-adenosyl-L-methionine site. The active site involves aspartate 150. Residue lysine 154 participates in substrate binding. The interaction with RNA stretch occupies residues 156-161 (KHNKRR). Residues aspartate 186 and 225-228 (TKFE) contribute to the substrate site.

This sequence belongs to the class I-like SAM-binding methyltransferase superfamily. TrmB family.

The catalysed reaction is guanosine(46) in tRNA + S-adenosyl-L-methionine = N(7)-methylguanosine(46) in tRNA + S-adenosyl-L-homocysteine. The protein operates within tRNA modification; N(7)-methylguanine-tRNA biosynthesis. In terms of biological role, catalyzes the formation of N(7)-methylguanine at position 46 (m7G46) in tRNA. The chain is tRNA (guanine-N(7)-)-methyltransferase from Polaromonas sp. (strain JS666 / ATCC BAA-500).